Consider the following 440-residue polypeptide: MTKTLAEQPGEGAAPVSPSPSRRALLHGAAGLGALAAGAAVAGPGLAFAAPAGLPLPPATPGITPFKIAVPQSALTDLKRRLGATRWPERETVEDWSQGVPLAKLQGLVEYWRTRYDWRRAEATLNRFPNYRTQLDGLGIHFLHARSKHENALPILLTHGWPGSVIEFLKLIPLLTDPTAHGGKAEDAFHVILPSLPGFGFSDKPTQKGWNMARIAKAWAELMQRLGYTHWVAQGGDWGAGVTTALAHLQPAGLAGIHLNFPLVFPEKLPTTDLSPEEQRALAQAQAFNTHGSGYFLLQTTRPQTVGYALADSPSGQAAWIYEKFQGWTDNKGDPESALSQDEMLDNISLYWLTDTAASSARIYWENAGSNFSGGKLDLPVGVSVFPRELFRAPKRWAEQTYSKLIYWNEPDRGGHFAAFEQPALFAHELRECFRQLRAK.

Positions 1–21 (MTKTLAEQPGEGAAPVSPSPS) are disordered. Positions 1–49 (MTKTLAEQPGEGAAPVSPSPSRRALLHGAAGLGALAAGAAVAGPGLAFA) form a signal peptide, tat-type signal.

The protein belongs to the peptidase S33 family. Post-translationally, predicted to be exported by the Tat system. The position of the signal peptide cleavage has not been experimentally proven.

The catalysed reaction is an epoxide + H2O = an ethanediol. This Stigmatella aurantiaca (strain DW4/3-1) protein is Putative epoxide hydrolase.